The following is a 218-amino-acid chain: Small ribosomal subunit protein uS3c (218 aa).

The region spanning 47-118 (VYKNIRNSSN…KLRMTLTEVT (72 aa)) is the KH type-2 domain.

It belongs to the universal ribosomal protein uS3 family. As to quaternary structure, part of the 30S ribosomal subunit.

The protein resides in the plastid. It localises to the chloroplast. This chain is Small ribosomal subunit protein uS3c (rps3), found in Physcomitrium patens (Spreading-leaved earth moss).